The primary structure comprises 234 residues: Coiled-coil domain-containing protein 194 (234 aa).

Positions 1–43 (MAEPGPEPGRAWRLLALCGAAVFLAAAAAGGALVAWNLAASTA) are cleaved as a signal peptide. A disordered region spans residues 44 to 63 (RSPRCPEPEQMNATVRPPDS). Positions 67–171 (VEELRRRLAE…LQRAGAAEAA (105 aa)) form a coiled coil. Positions 194–234 (GTLRKESRLRPRSGSRTKPSISHRPKSGSTKGCRRPPRDPQ) are disordered. Residues 203–219 (RPRSGSRTKPSISHRPK) are compositionally biased toward basic residues.

The protein is Coiled-coil domain-containing protein 194 of Mus musculus (Mouse).